The primary structure comprises 137 residues: uncharacterized protein (137 aa).

The helical transmembrane segment at 20 to 42 (TVLAFKGEGALALAGLLVMAAVA) threads the bilayer.

Its subcellular location is the host membrane. This is an uncharacterized protein from Dryophytes versicolor (chameleon treefrog).